We begin with the raw amino-acid sequence, 144 residues long: Tail fiber protein R (144 aa).

Functionally, structural or assembly protein of tail fibers. The protein is Tail fiber protein R (R) of Enterobacteriaceae (Bacteriophage P1).